Consider the following 413-residue polypeptide: Putative F-box protein At3g17560 (413 aa).

The F-box domain maps to 9-55 (TKLLFDLPQDVIEEIFSKVPVTCLRRIRSTCKRLYALLKDRGFIRKH).

The sequence is that of Putative F-box protein At3g17560 from Arabidopsis thaliana (Mouse-ear cress).